The chain runs to 235 residues: Octanoyltransferase (235 aa).

Residues 59-235 (PGSSQAVWLL…KKSLTERFGL (177 aa)) enclose the BPL/LPL catalytic domain. Substrate is bound by residues 101-108 (RGGEVTHH), 168-170 (SIG), and 181-183 (GLS). Cysteine 199 functions as the Acyl-thioester intermediate in the catalytic mechanism.

It belongs to the LipB family.

The protein resides in the cytoplasm. The catalysed reaction is octanoyl-[ACP] + L-lysyl-[protein] = N(6)-octanoyl-L-lysyl-[protein] + holo-[ACP] + H(+). It functions in the pathway protein modification; protein lipoylation via endogenous pathway; protein N(6)-(lipoyl)lysine from octanoyl-[acyl-carrier-protein]: step 1/2. Catalyzes the transfer of endogenously produced octanoic acid from octanoyl-acyl-carrier-protein onto the lipoyl domains of lipoate-dependent enzymes. Lipoyl-ACP can also act as a substrate although octanoyl-ACP is likely to be the physiological substrate. This is Octanoyltransferase from Prochlorococcus marinus (strain MIT 9211).